We begin with the raw amino-acid sequence, 637 residues long: Biosynthetic arginine decarboxylase (637 aa).

Lys-107 carries the N6-(pyridoxal phosphate)lysine modification. 289–299 (LDVGGGLGVDY) contributes to the substrate binding site.

The protein belongs to the Orn/Lys/Arg decarboxylase class-II family. SpeA subfamily. It depends on Mg(2+) as a cofactor. Pyridoxal 5'-phosphate serves as cofactor.

It catalyses the reaction L-arginine + H(+) = agmatine + CO2. Its function is as follows. Catalyzes the biosynthesis of agmatine from arginine. This Thermosynechococcus vestitus (strain NIES-2133 / IAM M-273 / BP-1) protein is Biosynthetic arginine decarboxylase.